The sequence spans 157 residues: Transcription antitermination protein NusB (157 aa).

Belongs to the NusB family.

Functionally, involved in transcription antitermination. Required for transcription of ribosomal RNA (rRNA) genes. Binds specifically to the boxA antiterminator sequence of the ribosomal RNA (rrn) operons. The polypeptide is Transcription antitermination protein NusB (Xylella fastidiosa (strain 9a5c)).